The following is a 469-amino-acid chain: Ribulose bisphosphate carboxylase large chain (469 aa).

2 residues coordinate substrate: N115 and T165. The active-site Proton acceptor is K167. K169 provides a ligand contact to substrate. Positions 193, 195, and 196 each coordinate Mg(2+). At K193 the chain carries N6-carboxylysine. The active-site Proton acceptor is the H286. Positions 287, 319, and 371 each coordinate substrate.

This sequence belongs to the RuBisCO large chain family. Type I subfamily. In terms of assembly, heterohexadecamer of 8 large chains and 8 small chains. Mg(2+) is required as a cofactor.

It is found in the plastid. The protein localises to the organellar chromatophore. It carries out the reaction 2 (2R)-3-phosphoglycerate + 2 H(+) = D-ribulose 1,5-bisphosphate + CO2 + H2O. It catalyses the reaction D-ribulose 1,5-bisphosphate + O2 = 2-phosphoglycolate + (2R)-3-phosphoglycerate + 2 H(+). Functionally, ruBisCO catalyzes two reactions: the carboxylation of D-ribulose 1,5-bisphosphate, the primary event in carbon dioxide fixation, as well as the oxidative fragmentation of the pentose substrate. Both reactions occur simultaneously and in competition at the same active site. The polypeptide is Ribulose bisphosphate carboxylase large chain (Paulinella chromatophora).